We begin with the raw amino-acid sequence, 92 residues long: WAP four-disulfide core domain protein 12 (92 aa).

A signal peptide spans 1–23; sequence MGSSRFLVLMVSLALVTLVAAEG. Residues 27–74 form the WAP domain; that stretch reads NIEKPEVCPADNVRCIKSDPPQCHTDQDCQGIRKCCYLHCGFKCVIPV. Disulfide bonds link Cys34–Cys62, Cys41–Cys66, Cys49–Cys61, and Cys55–Cys70.

Its subcellular location is the secreted. Its function is as follows. Antibacterial protein. Putative acid-stable proteinase inhibitor. This is WAP four-disulfide core domain protein 12 (WFDC12) from Aotus nancymaae (Ma's night monkey).